The following is a 576-amino-acid chain: Arginine--tRNA ligase (576 aa).

The short motif at 121-131 (PNLAKEMHVGH) is the 'HIGH' region element.

It belongs to the class-I aminoacyl-tRNA synthetase family. As to quaternary structure, monomer.

Its subcellular location is the cytoplasm. The catalysed reaction is tRNA(Arg) + L-arginine + ATP = L-arginyl-tRNA(Arg) + AMP + diphosphate. The protein is Arginine--tRNA ligase of Alteromonas mediterranea (strain DSM 17117 / CIP 110805 / LMG 28347 / Deep ecotype).